A 99-amino-acid chain; its full sequence is Protein MOST-1 (99 aa).

In terms of assembly, interacts with TSPO, IGHM and IGHD. Expressed in the heart, kidney, liver, pancreas, small intestine, ovary, testis, prostate and thymus. Expressed in all of the cancer cell lines tested.

It localises to the cytoplasm. The protein resides in the microsome membrane. It is found in the endoplasmic reticulum membrane. May be involved in cell survival, proliferation and progression of cancer cells. In Homo sapiens (Human), this protein is Protein MOST-1 (C8orf17).